The chain runs to 262 residues: MPKFAANLSMLFTDVPFLDRFKAAADAGFTSVEYLFPYEYPAPLLAEKLRENGLKQVLFNTAPGNIAAGEWGVSALPDRIEDARRDIDNALEYALALNCPSVLVMGGVVPPGEDRDAYQQTFIDNLRYAADKFAPHGINIMIEALSAKVKPNYLFASQYQALELANLIDRPNIYIQVDFFHAQIVDGNLTQIIHDLDGRIGHIQIASVPARHEPDEGEINYPFIFAELDRVNYSGWIGCEYNPRGKTEDGLGWAEPWLEKKH.

The active-site Proton donor/acceptor is glutamate 143. 4 residues coordinate Mg(2+): glutamate 143, aspartate 178, glutamine 204, and glutamate 240. The active-site Proton donor/acceptor is glutamate 240.

This sequence belongs to the hyi family. OtnI subfamily.

The catalysed reaction is 2-dehydro-L-erythronate = 3-dehydro-L-erythronate. It catalyses the reaction 2-dehydro-D-erythronate = 3-dehydro-D-erythronate. In terms of biological role, catalyzes the isomerization of 2-oxo-tetronate to 3-oxo-tetronate. In Pectobacterium atrosepticum (strain SCRI 1043 / ATCC BAA-672) (Erwinia carotovora subsp. atroseptica), this protein is 2-oxo-tetronate isomerase.